A 770-amino-acid polypeptide reads, in one-letter code: Molybdenum cofactor sulfurase (770 aa).

The residue at position 231 (lysine 231) is an N6-(pyridoxal phosphate)lysine. Cysteine 395 is an active-site residue. An MOSC domain is found at 601-770 (DWVSRALGVS…TVSGVIEESE (170 aa)).

The protein belongs to the class-V pyridoxal-phosphate-dependent aminotransferase family. MOCOS subfamily. The cofactor is pyridoxal 5'-phosphate.

The catalysed reaction is Mo-molybdopterin + L-cysteine + AH2 = thio-Mo-molybdopterin + L-alanine + A + H2O. In terms of biological role, sulfurates the molybdenum cofactor. Sulfation of molybdenum is essential for xanthine dehydrogenase (XDH) and aldehyde oxidase (ADO) enzymes in which molybdenum cofactor is liganded by 1 oxygen and 1 sulfur atom in active form. In Anopheles gambiae (African malaria mosquito), this protein is Molybdenum cofactor sulfurase.